The sequence spans 247 residues: tRNA (guanine-N(1)-)-methyltransferase (247 aa).

S-adenosyl-L-methionine contacts are provided by residues glycine 115 and isoleucine 134–leucine 139.

The protein belongs to the RNA methyltransferase TrmD family. As to quaternary structure, homodimer.

The protein localises to the cytoplasm. The enzyme catalyses guanosine(37) in tRNA + S-adenosyl-L-methionine = N(1)-methylguanosine(37) in tRNA + S-adenosyl-L-homocysteine + H(+). Specifically methylates guanosine-37 in various tRNAs. The polypeptide is tRNA (guanine-N(1)-)-methyltransferase (Anaeromyxobacter sp. (strain K)).